A 158-amino-acid polypeptide reads, in one-letter code: NADPH-dependent 7-cyano-7-deazaguanine reductase (158 aa).

C56 functions as the Thioimide intermediate in the catalytic mechanism. The Proton donor role is filled by D63. Substrate is bound by residues 78-80 (LES) and 97-98 (HE).

Belongs to the GTP cyclohydrolase I family. QueF type 1 subfamily.

It is found in the cytoplasm. It carries out the reaction 7-aminomethyl-7-carbaguanine + 2 NADP(+) = 7-cyano-7-deazaguanine + 2 NADPH + 3 H(+). Its pathway is tRNA modification; tRNA-queuosine biosynthesis. Its function is as follows. Catalyzes the NADPH-dependent reduction of 7-cyano-7-deazaguanine (preQ0) to 7-aminomethyl-7-deazaguanine (preQ1). This is NADPH-dependent 7-cyano-7-deazaguanine reductase from Nitrobacter winogradskyi (strain ATCC 25391 / DSM 10237 / CIP 104748 / NCIMB 11846 / Nb-255).